A 201-amino-acid polypeptide reads, in one-letter code: Small ribosomal subunit protein uS4 (201 aa).

The tract at residues 26–45 is disordered; it reads FEKRNYPPGQHGNNRRRGKK. In terms of domain architecture, S4 RNA-binding spans 93–153; the sequence is SRLDNVVYRM…EKSKSLAVVQ (61 aa).

It belongs to the universal ribosomal protein uS4 family. In terms of assembly, part of the 30S ribosomal subunit. Contacts protein S5. The interaction surface between S4 and S5 is involved in control of translational fidelity.

One of the primary rRNA binding proteins, it binds directly to 16S rRNA where it nucleates assembly of the body of the 30S subunit. In terms of biological role, with S5 and S12 plays an important role in translational accuracy. The polypeptide is Small ribosomal subunit protein uS4 (Christiangramia forsetii (strain DSM 17595 / CGMCC 1.15422 / KT0803) (Gramella forsetii)).